Reading from the N-terminus, the 352-residue chain is Uroporphyrinogen decarboxylase (352 aa).

Residues arginine 27–arginine 31, aspartate 77, tyrosine 154, threonine 209, and histidine 325 each bind substrate.

The protein belongs to the uroporphyrinogen decarboxylase family. In terms of assembly, homodimer.

The protein resides in the cytoplasm. It carries out the reaction uroporphyrinogen III + 4 H(+) = coproporphyrinogen III + 4 CO2. Its pathway is porphyrin-containing compound metabolism; protoporphyrin-IX biosynthesis; coproporphyrinogen-III from 5-aminolevulinate: step 4/4. Functionally, catalyzes the decarboxylation of four acetate groups of uroporphyrinogen-III to yield coproporphyrinogen-III. The sequence is that of Uroporphyrinogen decarboxylase from Legionella pneumophila (strain Paris).